The chain runs to 148 residues: Lysozyme C (148 aa).

A signal peptide spans 1–18 (MKAVIILGLVLLSVTVQG). The C-type lysozyme domain maps to 19-148 (KIFERCELAR…VSQYVQGCGV (130 aa)). Disulfide bonds link C24-C146, C48-C134, C83-C99, and C95-C113. Active-site residues include E53 and D71.

The protein belongs to the glycosyl hydrolase 22 family. As to quaternary structure, monomer.

It is found in the secreted. The enzyme catalyses Hydrolysis of (1-&gt;4)-beta-linkages between N-acetylmuramic acid and N-acetyl-D-glucosamine residues in a peptidoglycan and between N-acetyl-D-glucosamine residues in chitodextrins.. Its function is as follows. Lysozymes have primarily a bacteriolytic function; those in tissues and body fluids are associated with the monocyte-macrophage system and enhance the activity of immunoagents. The sequence is that of Lysozyme C (LYZ) from Macaca mulatta (Rhesus macaque).